The primary structure comprises 554 residues: Solute carrier family 22 member 22 (554 aa).

Residues 1–15 lie on the Cytoplasmic side of the membrane; that stretch reads MDFDEILHHVGDSGR. Residues 16 to 36 traverse the membrane as a helical segment; it reads FQICMIILLNILSLVLSPHDV. The Extracellular portion of the chain corresponds to 37-144; the sequence is LENFTAAIPA…DLVCDFQSFK (108 aa). Residue Asn-39 is glycosylated (N-linked (GlcNAc...) asparagine). Residues 145-165 traverse the membrane as a helical segment; sequence YYAQATSLAGHLVSCPLSGII. The Cytoplasmic segment spans residues 166–172; that stretch reads SDRFGRK. A helical membrane pass occupies residues 173 to 193; sequence PLLMYCSLAYGAVGTYCAFAP. Asn-194 carries N-linked (GlcNAc...) asparagine glycosylation. The Extracellular portion of the chain corresponds to 194–199; the sequence is NFSVYC. Residues 200–220 form a helical membrane-spanning segment; that stretch reads VLRFLLSAFQSTILINSLILV. Residues 221–231 are Cytoplasmic-facing; that stretch reads LEEASVQWHPT. Residues 232–252 form a helical membrane-spanning segment; that stretch reads IIVLSGLFNSIGQGVLGGLAY. At 253 to 258 the chain is on the extracellular side; it reads VISDWH. A helical transmembrane segment spans residues 259–279; the sequence is LLQLAYALPFFIFFVLFCWVP. Over 280–347 the chain is Cytoplasmic; that stretch reads ESVRWLIITG…DIFINPLIRK (68 aa). Residues 348–368 form a helical membrane-spanning segment; that stretch reads IVLSNSSLLFAELFSFVGLLL. Residues 369-376 lie on the Extracellular side of the membrane; sequence DVQLLGKN. A helical membrane pass occupies residues 377–397; the sequence is MFLTQIFLGAIDVPSKSLTYF. Over 398–405 the chain is Cytoplasmic; sequence TIRNVSRR. A helical transmembrane segment spans residues 406 to 426; it reads PLIAFLLLTTGSCITITIFIS. Residues 427–434 are Extracellular-facing; the sequence is EEMYVLRT. A helical membrane pass occupies residues 435-455; the sequence is IIFILGKGCFAAFTCISTTYI. Over 456–466 the chain is Cytoplasmic; sequence NELSPVELRST. Residues 467-487 form a helical membrane-spanning segment; that stretch reads LNGVFLAVVRLAGVLSALTLA. The Extracellular portion of the chain corresponds to 488–491; that stretch reads TRKY. The chain crosses the membrane as a helical span at residues 492 to 512; that stretch reads FVYLPMILYGVLPIVATISIL. At 513-554 the chain is on the cytoplasmic side; it reads FLPETFNLPHTDIIKDMEKRKRLMSKNISKKEGQDFLETTEC.

This sequence belongs to the major facilitator (TC 2.A.1) superfamily. Organic cation transporter (TC 2.A.1.19) family. In terms of tissue distribution, specifically expressed in kidney where it is found in proximal convoluted tubules (at protein level). Colocalizes with the prostaglandin-inactivating enzyme HPGD in kidney (at protein level). Not detected in other tissues tested.

It is found in the basolateral cell membrane. Its function is as follows. Sodium-independent organic anion transporter which exhibits high specificity for a subset of prostaglandins including prostaglandin E2 (PGE2), prostaglandin E1 (PGE1), prostaglandin F2-alpha (PGF2-alpha) and prostaglandin D2 (PGD2). In Mus musculus (Mouse), this protein is Solute carrier family 22 member 22.